A 134-amino-acid polypeptide reads, in one-letter code: Small ribosomal subunit protein uS8 (134 aa).

It belongs to the universal ribosomal protein uS8 family. In terms of assembly, part of the 30S ribosomal subunit. Contacts proteins S5 and S12.

Its function is as follows. One of the primary rRNA binding proteins, it binds directly to 16S rRNA central domain where it helps coordinate assembly of the platform of the 30S subunit. In Nitratiruptor sp. (strain SB155-2), this protein is Small ribosomal subunit protein uS8.